A 263-amino-acid polypeptide reads, in one-letter code: uncharacterized protein (263 aa).

This sequence belongs to the AtsA family.

The protein resides in the plastid. Its subcellular location is the chloroplast. This is an uncharacterized protein from Pyropia yezoensis (Susabi-nori).